Here is a 200-residue protein sequence, read N- to C-terminus: A-type ATP synthase subunit E 3 (200 aa).

It belongs to the V-ATPase E subunit family. Has multiple subunits with at least A(3), B(3), C, D, E, F, H, I and proteolipid K(x).

It is found in the cell membrane. Functionally, component of the A-type ATP synthase that produces ATP from ADP in the presence of a proton gradient across the membrane. The protein is A-type ATP synthase subunit E 3 of Methanospirillum hungatei JF-1 (strain ATCC 27890 / DSM 864 / NBRC 100397 / JF-1).